We begin with the raw amino-acid sequence, 185 residues long: Protein-lysine palmitoyltransferase CyaC (185 aa).

Residues His33 and Asp102 contribute to the active site.

This sequence belongs to the RTX toxin acyltransferase family. Homodimer.

The protein resides in the cytoplasm. It catalyses the reaction hexadecanoyl-[ACP] + L-lysyl-[protein] = N(6)-hexadecanoyl-L-lysyl-[protein] + holo-[ACP] + H(+). It carries out the reaction (9Z)-hexadecenoyl-[ACP] + L-lysyl-[protein] = N(6)-[(9Z)-hexadecenoyl]-L-lysyl-[protein] + holo-[ACP] + H(+). Functionally, protein-lysine palmitoyltransferase that catalyzes palmitoylation of the protoxin (CyaA) at two internal lysine residues, thereby converting it to the active toxin. In Bordetella bronchiseptica (strain ATCC BAA-588 / NCTC 13252 / RB50) (Alcaligenes bronchisepticus), this protein is Protein-lysine palmitoyltransferase CyaC.